The sequence spans 309 residues: Ribosomal RNA small subunit methyltransferase H (309 aa).

Residues 36–38, Asp-56, Phe-82, Asp-103, and Gln-110 each bind S-adenosyl-L-methionine; that span reads GGH.

This sequence belongs to the methyltransferase superfamily. RsmH family.

The protein resides in the cytoplasm. The catalysed reaction is cytidine(1402) in 16S rRNA + S-adenosyl-L-methionine = N(4)-methylcytidine(1402) in 16S rRNA + S-adenosyl-L-homocysteine + H(+). Its function is as follows. Specifically methylates the N4 position of cytidine in position 1402 (C1402) of 16S rRNA. The protein is Ribosomal RNA small subunit methyltransferase H of Hahella chejuensis (strain KCTC 2396).